Reading from the N-terminus, the 397-residue chain is 1-deoxy-D-xylulose 5-phosphate reductoisomerase (397 aa).

NADPH is bound by residues Thr10, Gly11, Ser12, Ile13, Asn39, and Asn125. Lys126 contributes to the 1-deoxy-D-xylulose 5-phosphate binding site. NADPH is bound at residue Glu127. Asp151 serves as a coordination point for Mn(2+). Positions 152, 153, 187, and 210 each coordinate 1-deoxy-D-xylulose 5-phosphate. Glu153 is a binding site for Mn(2+). Gly216 provides a ligand contact to NADPH. 1-deoxy-D-xylulose 5-phosphate-binding residues include Ser223, Asn228, Lys229, and Glu232. Glu232 contributes to the Mn(2+) binding site.

Belongs to the DXR family. Homodimer. It depends on Mg(2+) as a cofactor. Mn(2+) serves as cofactor.

It carries out the reaction 2-C-methyl-D-erythritol 4-phosphate + NADP(+) = 1-deoxy-D-xylulose 5-phosphate + NADPH + H(+). Its pathway is isoprenoid biosynthesis; isopentenyl diphosphate biosynthesis via DXP pathway; isopentenyl diphosphate from 1-deoxy-D-xylulose 5-phosphate: step 1/6. Its function is as follows. Catalyzes the NADPH-dependent rearrangement and reduction of 1-deoxy-D-xylulose-5-phosphate (DXP) to 2-C-methyl-D-erythritol 4-phosphate (MEP). In Wigglesworthia glossinidia brevipalpis, this protein is 1-deoxy-D-xylulose 5-phosphate reductoisomerase.